We begin with the raw amino-acid sequence, 152 residues long: Transcriptional regulator MraZ (152 aa).

SpoVT-AbrB domains lie at 5–52 (AQAI…PLKE) and 81–124 (ATEC…SETE).

The protein belongs to the MraZ family. Forms oligomers.

It is found in the cytoplasm. The protein resides in the nucleoid. The chain is Transcriptional regulator MraZ from Mannheimia succiniciproducens (strain KCTC 0769BP / MBEL55E).